Here is a 250-residue protein sequence, read N- to C-terminus: Triosephosphate isomerase (250 aa).

9–11 (NWK) contacts substrate. Catalysis depends on His-95, which acts as the Electrophile. Catalysis depends on Glu-167, which acts as the Proton acceptor. Substrate contacts are provided by residues Gly-173, Ser-212, and 233–234 (GG).

This sequence belongs to the triosephosphate isomerase family. Homodimer.

It is found in the cytoplasm. The enzyme catalyses D-glyceraldehyde 3-phosphate = dihydroxyacetone phosphate. Its pathway is carbohydrate biosynthesis; gluconeogenesis. It functions in the pathway carbohydrate degradation; glycolysis; D-glyceraldehyde 3-phosphate from glycerone phosphate: step 1/1. Its function is as follows. Involved in the gluconeogenesis. Catalyzes stereospecifically the conversion of dihydroxyacetone phosphate (DHAP) to D-glyceraldehyde-3-phosphate (G3P). The chain is Triosephosphate isomerase from Psychromonas ingrahamii (strain DSM 17664 / CCUG 51855 / 37).